Reading from the N-terminus, the 757-residue chain is Xaa-Pro dipeptidyl-peptidase (757 aa).

Residues serine 348, aspartate 468, and histidine 498 each act as charge relay system in the active site.

Belongs to the peptidase S15 family. In terms of assembly, homodimer.

It is found in the cytoplasm. It carries out the reaction Hydrolyzes Xaa-Pro-|- bonds to release unblocked, N-terminal dipeptides from substrates including Ala-Pro-|-p-nitroanilide and (sequentially) Tyr-Pro-|-Phe-Pro-|-Gly-Pro-|-Ile.. Its function is as follows. Removes N-terminal dipeptides sequentially from polypeptides having unsubstituted N-termini provided that the penultimate residue is proline. In Streptococcus pneumoniae (strain ATCC 700669 / Spain 23F-1), this protein is Xaa-Pro dipeptidyl-peptidase.